The chain runs to 744 residues: Cell surface receptor daf-4 (744 aa).

Positions 1–31 (MNQKGTVRLKALVLICLPLFLIATPVPVAVT) are cleaved as a signal peptide. The Extracellular portion of the chain corresponds to 48–253 (WANTLVSKVA…IALLILAYVG (206 aa)). N-linked (GlcNAc...) asparagine glycosylation is found at N60, N134, and N165. Residues 254–274 (WKFQQNKKEEIKKQQKIKFDM) form a helical membrane-spanning segment. Residues 275–744 (EKTDALEAGN…PSGTFGTFTT (470 aa)) are Cytoplasmic-facing. Residues 306 to 603 (ITDFQLISKG…FARVWNHIMS (298 aa)) enclose the Protein kinase domain. ATP-binding positions include 312 to 320 (ISKGRFGKV) and K338. Catalysis depends on D440, which acts as the Proton acceptor. Disordered stretches follow at residues 605-686 (PDSS…PEPE) and 724-744 (AGAD…TFTT). Over residues 620–639 (RGVDDVEQSEKPEGIEEMQH) the composition is skewed to basic and acidic residues. Positions 731–744 (STPTPSGTFGTFTT) are enriched in low complexity.

Belongs to the protein kinase superfamily. TKL Ser/Thr protein kinase family. TGFB receptor subfamily. As to quaternary structure, may interact with daf-1 to regulate dauer larva development. Interacts with sma-10. Pharynx, intestine, hypodermis and body wall muscles in L1 through to adult stages. Also expressed in head neurons, ventral cord and tail neurons. Subset of head neurons show coexpression with daf-1 when dauer/nondauer decision is made.

It is found in the cell membrane. It catalyses the reaction L-threonyl-[receptor-protein] + ATP = O-phospho-L-threonyl-[receptor-protein] + ADP + H(+). The catalysed reaction is L-seryl-[receptor-protein] + ATP = O-phospho-L-seryl-[receptor-protein] + ADP + H(+). In terms of biological role, involved in a TGF-beta pathway. May be a receptor for TGF-beta-like ligand daf-7. Controls the decision of whether or not larvae enter a developmentally arrested state, known as dauer, in response to environmental conditions. Regulates body size and male tail patterning. Involved in regulating entry into quiescence triggered by satiety. Involved in sensitivity to CO2 levels. This is Cell surface receptor daf-4 from Caenorhabditis elegans.